The chain runs to 447 residues: Protein odr-4 homolog (447 aa).

The next 2 membrane-spanning stretches (helical) occupy residues 82–102 (MLPG…ELAD) and 425–445 (IGVI…FHYF).

This sequence belongs to the ODR-4 family. Ubiquitously expressed.

Its subcellular location is the membrane. Functionally, may play a role in the trafficking of a subset of G-protein coupled receptors. This chain is Protein odr-4 homolog (Odr4), found in Mus musculus (Mouse).